Reading from the N-terminus, the 162-residue chain is MNLRIGHGYDVHKFGDSGPITICGVKIDYEQGLLAHSDGDVALHALCDALLGALALGDIGGHFPDTDAQFKGADSRALLRHVMTLVNEHGYEIGNLDLTIVAQAPKMAPHIQAMRENIRQDVNAQLNQVNVKATTTEKLGFAGRKEGIACYAVVLLNKSIAA.

2 residues coordinate a divalent metal cation: aspartate 10 and histidine 12. 4-CDP-2-C-methyl-D-erythritol 2-phosphate contacts are provided by residues 10–12 (DVH) and 36–37 (HS). Histidine 44 lines the a divalent metal cation pocket. 4-CDP-2-C-methyl-D-erythritol 2-phosphate contacts are provided by residues 58–60 (DIG), 63–67 (FPDTD), 102–108 (AQAPKMA), 134–137 (TTTE), phenylalanine 141, and arginine 144.

It belongs to the IspF family. In terms of assembly, homotrimer. A divalent metal cation is required as a cofactor.

It carries out the reaction 4-CDP-2-C-methyl-D-erythritol 2-phosphate = 2-C-methyl-D-erythritol 2,4-cyclic diphosphate + CMP. The protein operates within isoprenoid biosynthesis; isopentenyl diphosphate biosynthesis via DXP pathway; isopentenyl diphosphate from 1-deoxy-D-xylulose 5-phosphate: step 4/6. Involved in the biosynthesis of isopentenyl diphosphate (IPP) and dimethylallyl diphosphate (DMAPP), two major building blocks of isoprenoid compounds. Catalyzes the conversion of 4-diphosphocytidyl-2-C-methyl-D-erythritol 2-phosphate (CDP-ME2P) to 2-C-methyl-D-erythritol 2,4-cyclodiphosphate (ME-CPP) with a corresponding release of cytidine 5-monophosphate (CMP). This Pseudoalteromonas atlantica (strain T6c / ATCC BAA-1087) protein is 2-C-methyl-D-erythritol 2,4-cyclodiphosphate synthase.